A 319-amino-acid chain; its full sequence is Large ribosomal subunit protein uL10 (319 aa).

The disordered stretch occupies residues 289 to 319 (EQKSAAPAAKEEAPKEDSEESDEDMGFGLFD).

It belongs to the universal ribosomal protein uL10 family. In terms of assembly, P0 forms a pentameric complex by interaction with dimers of P1 and P2. In terms of processing, phosphorylated.

It localises to the nucleus. The protein resides in the cytoplasm. Functionally, ribosomal protein P0 is the functional equivalent of E.coli protein L10. This Danio rerio (Zebrafish) protein is Large ribosomal subunit protein uL10 (rplp0).